The chain runs to 452 residues: Major royal jelly protein 2 (452 aa).

Positions 1–17 (MTRWLFMVACLGIACQG) are cleaved as a signal peptide. N-linked (GlcNAc...) asparagine glycosylation is found at N145 and N178. Residues 416–452 (NNNQNDNIQNTNNQNDNNQKNNKKNANNQKNNNQNDN) are disordered.

Post-translationally, N-linked core structure contains mannose (which consists of 8-alpha-mannosyl residues, one beta-mannosyl residue, and chitobiose). As to expression, secreted from the hypopharyngeal glands of the worker honey bee (at protein level); expression peaks at 12 days post eclosion. Expressed in the brains of adult worker bees peaking at 12 days post eclosion (at protein level). Expressed in the spermatheca of adult queen bees (at protein level); Expression levels are higher in mated queens than in virgin queens.

The protein resides in the secreted. Highly abundant protein component of royal jelly, a substance produced in the hypopharyngeal gland containing proteins, free amino acids, fatty acids, sugars and other nutrients, which is fed to developing larvae by worker nurse bees. Major royal jelly proteins (MRJPs) are high in essential amino acids and probably have a nutritional function in larval food. All larvae are fed some royal jelly (also known as worker jelly) early in their development but it forms the principal source of nutrition for larvae destined to become queen bees. Produced in the spermatheca of adult queen bees, along with other major royal jelly proteins, where it may act as a nutrient supply for sperm stored by mated queens, or be involved in energy metabolism. The polypeptide is Major royal jelly protein 2 (Apis mellifera (Honeybee)).